Reading from the N-terminus, the 119-residue chain is Ribonuclease P protein component (119 aa).

It belongs to the RnpA family. In terms of assembly, consists of a catalytic RNA component (M1 or rnpB) and a protein subunit.

It carries out the reaction Endonucleolytic cleavage of RNA, removing 5'-extranucleotides from tRNA precursor.. Its function is as follows. RNaseP catalyzes the removal of the 5'-leader sequence from pre-tRNA to produce the mature 5'-terminus. It can also cleave other RNA substrates such as 4.5S RNA. The protein component plays an auxiliary but essential role in vivo by binding to the 5'-leader sequence and broadening the substrate specificity of the ribozyme. In Streptococcus gordonii (strain Challis / ATCC 35105 / BCRC 15272 / CH1 / DL1 / V288), this protein is Ribonuclease P protein component.